A 138-amino-acid chain; its full sequence is Small ribosomal subunit protein uS11c (138 aa).

The interval 1 to 24 (MTKPIPRIGSRRNGRIGSRKSGRR) is disordered. The segment covering 9–24 (GSRRNGRIGSRKSGRR) has biased composition (basic residues).

It belongs to the universal ribosomal protein uS11 family. As to quaternary structure, part of the 30S ribosomal subunit.

The protein localises to the plastid. Its subcellular location is the chloroplast. The polypeptide is Small ribosomal subunit protein uS11c (Liriodendron tulipifera (Tuliptree)).